The following is a 235-amino-acid chain: Hydroxyacylglutathione hydrolase (235 aa).

7 residues coordinate Zn(2+): His-53, His-55, Asp-57, His-58, His-109, Asp-127, and His-165.

It belongs to the metallo-beta-lactamase superfamily. Glyoxalase II family. As to quaternary structure, monomer. The cofactor is Zn(2+).

It carries out the reaction an S-(2-hydroxyacyl)glutathione + H2O = a 2-hydroxy carboxylate + glutathione + H(+). It participates in secondary metabolite metabolism; methylglyoxal degradation; (R)-lactate from methylglyoxal: step 2/2. Thiolesterase that catalyzes the hydrolysis of S-D-lactoyl-glutathione to form glutathione and D-lactic acid. The chain is Hydroxyacylglutathione hydrolase from Actinobacillus pleuropneumoniae serotype 7 (strain AP76).